The sequence spans 2380 residues: Probable polyketide synthase 25 (2380 aa).

The span at 1–18 (MDNSYLNNPQFDINNGNK) shows a compositional bias: polar residues. A disordered region spans residues 1-29 (MDNSYLNNPQFDINNGNKEVTDDDNNKNN). The region spanning 31–457 (DNLVAIVGVG…GSNCCLVLSQ (427 aa)) is the Ketosynthase family 3 (KS3) domain. Active-site for beta-ketoacyl synthase activity residues include cysteine 198, histidine 340, and histidine 380. The tract at residues 649-682 (GIKASFMLGHSLGEVTTAYCSGMIDIDQLCYLIY) is acyl/malonyl transferase. The active-site For acyl/malonyl transferase activity is the serine 659. Residues 948 to 1070 (ISILGNSMQD…ANFQLYNNGK (123 aa)) form an N-terminal hotdog fold region. Residues 948–1234 (ISILGNSMQD…CTSLTPVKDP (287 aa)) form the PKS/mFAS DH domain. The active-site Proton acceptor; for dehydratase activity is histidine 982. Residues 1085–1234 (NLSSIPWDKF…CTSLTPVKDP (150 aa)) form a C-terminal hotdog fold region. The Proton donor; for dehydratase activity role is filled by aspartate 1148. The Carrier domain occupies 2299–2376 (KNSTNIKDKF…MVCQIINDNF (78 aa)). Serine 2336 carries the post-translational modification O-(pantetheine 4'-phosphoryl)serine.

Pantetheine 4'-phosphate is required as a cofactor.

Functionally, probable polyketide synthase. The chain is Probable polyketide synthase 25 (pks25) from Dictyostelium discoideum (Social amoeba).